Consider the following 310-residue polypeptide: Ribosomal protein uL3 glutamine methyltransferase (310 aa).

It belongs to the protein N5-glutamine methyltransferase family. PrmB subfamily.

The enzyme catalyses L-glutaminyl-[ribosomal protein uL3] + S-adenosyl-L-methionine = N(5)-methyl-L-glutaminyl-[ribosomal protein uL3] + S-adenosyl-L-homocysteine + H(+). Its function is as follows. Specifically methylates large ribosomal subunit protein uL3 on 'Gln-150'. The chain is Ribosomal protein uL3 glutamine methyltransferase from Shigella dysenteriae serotype 1 (strain Sd197).